The chain runs to 497 residues: MAEKYVIAIDEGTTSARAIVFDKELNILGIGQNEFTQYYPQPGYVEHSPEEIWQAQLLAINKALEKAKIDRNNILSIGITNQRETTVMWDTRTGKPIYNAIVWQDRRTAPITDYLKANYLRLIKDRTGLVPDPYFSASKIKWILDNIPNAREKAEKGEIKFGTIDTYLIWKLTNGKAHVTDYSNASRTMLFNIRKLEWDREILEILNIPEAILPDVKPSSEIYGYAEILNSSIPISGDAGDQQAALFGQIAFNQGDVKCTYGTGSFILLNTGSNLVSSNDLLTTIAWGVGKGITYALEGSIFITGAAVQWFRDGLRAIDVSDEIEPLAGSVPDNGGVYFVPAFTGLGAPYWDPYARGLIIGITRGTTKAHIARAILESMAYQTMDVLGIMQRDSGIKIDALKVDGGASKNDLLMQFQADILKMKVVRPKIMETTSMGVAMLAGLSVGYWNSMDELKQKWKIDQVFEPKMDDEYREKLYSGWKEAVRRALGWAKTIGG.

T13 provides a ligand contact to ADP. Residues T13, T14, and S15 each contribute to the ATP site. T13 contacts sn-glycerol 3-phosphate. Position 17 (R17) interacts with ADP. Sn-glycerol 3-phosphate is bound by residues R83, E84, Y134, and D241. Glycerol is bound by residues R83, E84, Y134, D241, and Q242. ADP is bound by residues T263 and G305. 4 residues coordinate ATP: T263, G305, Q309, and G406. ADP contacts are provided by G406 and N410.

This sequence belongs to the FGGY kinase family.

The enzyme catalyses glycerol + ATP = sn-glycerol 3-phosphate + ADP + H(+). It participates in polyol metabolism; glycerol degradation via glycerol kinase pathway; sn-glycerol 3-phosphate from glycerol: step 1/1. Functionally, key enzyme in the regulation of glycerol uptake and metabolism. Catalyzes the phosphorylation of glycerol to yield sn-glycerol 3-phosphate. This is Glycerol kinase 2 from Sulfolobus acidocaldarius (strain ATCC 33909 / DSM 639 / JCM 8929 / NBRC 15157 / NCIMB 11770).